Consider the following 185-residue polypeptide: CASP-like protein 2C2 (185 aa).

Residues 1-22 (MAAAARVSEVKAEGLLRGACTA) lie on the Cytoplasmic side of the membrane. The helical transmembrane segment at 23–43 (LAAAAALLVGLSTQTETVLLV) threads the bilayer. The Extracellular portion of the chain corresponds to 44-53 (RKKATVKDVQ). The chain crosses the membrane as a helical span at residues 54–74 (ALWVLAMAAAAAAGYHLLQLL). Over 75–104 (KCLYLGRVGGARPCRRSSRALAWTCLLLDK) the chain is Cytoplasmic. A helical transmembrane segment spans residues 105 to 125 (ACAYTTFATTVAAAQACVVAL). The Extracellular segment spans residues 126–146 (DGAHALQWTKLCNIYTRFCEQ). A helical transmembrane segment spans residues 147-167 (VAGSLVLGMLAAVGTAVLSAA). Residues 168-185 (SARNVFRHYASLETYAAH) are Cytoplasmic-facing.

Belongs to the Casparian strip membrane proteins (CASP) family. In terms of assembly, homodimer and heterodimers.

Its subcellular location is the cell membrane. The chain is CASP-like protein 2C2 from Zea mays (Maize).